The following is a 523-amino-acid chain: La-related protein 1C (523 aa).

The segment covering 1–16 has biased composition (low complexity); the sequence is MASATSNNPASSSMSP. Disordered regions lie at residues 1–52 and 95–313; these read MASA…VRGE and AAGD…VRHP. At alanine 2 the chain carries N-acetylalanine. Polar residues predominate over residues 22-31; the sequence is NHGSPTASVA. 2 stretches are compositionally biased toward low complexity: residues 32–44 and 146–169; these read QSPR…VSSP and SNKS…ASSS. A Phosphoserine modification is found at serine 33. 2 stretches are compositionally biased toward polar residues: residues 206-270 and 282-305; these read QRNG…NGNH and HGNQ…SQRG. One can recognise an HTH La-type RNA-binding domain in the interval 363-452; the sequence is HYQDPPLHMK…RDNWQNWVLR (90 aa). A disordered region spans residues 474-523; that stretch reads GNLSVDQSSADPIGGSSSQLQPTEALSDDQQQSSSTAPVSNHNAPDGANR. The segment covering 477 to 516 has biased composition (polar residues); sequence SVDQSSADPIGGSSSQLQPTEALSDDQQQSSSTAPVSNHN.

This sequence belongs to the LARP family. Age-dependent accumulation in rosette leaves.

Its subcellular location is the cytoplasm. Its function is as follows. Promotes leaf senescence mediated by abscisic acid (ABA), salicylic acid (SA) and jasmonic acid (MeJA), probably though the induction of expression of senescence-associated genes (SAGs) and defense-related genes. The polypeptide is La-related protein 1C (LARP1C) (Arabidopsis thaliana (Mouse-ear cress)).